A 539-amino-acid chain; its full sequence is Trans-2-enoyl-CoA reductase (539 aa).

The transit peptide at 1–68 (MSCPASPSAA…TAAALTTMRE (68 aa)) directs the protein to the mitochondrion. Residues 190 to 195 (GCSTGY), 216 to 217 (LA), 253 to 254 (DA), and 281 to 282 (IA) contribute to the NAD(+) site. Y367 is a binding site for substrate. Y377 serves as the catalytic Proton donor. NAD(+)-binding positions include K386 and 412–414 (LVT).

The protein belongs to the TER reductase family. As to quaternary structure, monomer. The N-terminus is blocked.

The protein resides in the mitochondrion. The enzyme catalyses a 2,3-saturated acyl-CoA + NAD(+) = a (2E)-enoyl-CoA + NADH + H(+). The catalysed reaction is butanoyl-CoA + NAD(+) = (2E)-butenoyl-CoA + NADH + H(+). It carries out the reaction hexanoyl-CoA + NAD(+) = (2E)-hexenoyl-CoA + NADH + H(+). It catalyses the reaction a (2E)-enoyl-CoA + NADPH + H(+) = a 2,3-saturated acyl-CoA + NADP(+). The enzyme catalyses butanoyl-CoA + NADP(+) = (2E)-butenoyl-CoA + NADPH + H(+). The catalysed reaction is (2E)-hexenoyl-CoA + NADPH + H(+) = hexanoyl-CoA + NADP(+). It participates in lipid metabolism; fatty acid metabolism. Its function is as follows. Catalyzes reduction of trans-2-enoyl-CoA to acyl-CoA, an important step in the fatty acid biosynthesis pathway, which is performed in mitochondria under anaerobiosis. Preferably catalyzes the reduction of short chain length substrates such as crotonyl-CoA ((2E)-butenoyl-CoA) and (2E)-hexenoyl-CoA. Can use both NADH and NADPH as electron donor, with 2-3-fold higher specific activities for NADH relative to NADPH. Originally thought to contribute to wax ester production under anaerobic conditions. Later shown to be dispensable for wax ester production under anaerobic conditions, but involved in the greening process (chlorophyll synthesis and/or chloroplast development). The protein is Trans-2-enoyl-CoA reductase (TER) of Euglena gracilis.